Here is a 317-residue protein sequence, read N- to C-terminus: Beta-ketoacyl-[acyl-carrier-protein] synthase III (317 aa).

Residues cysteine 112 and histidine 244 contribute to the active site. Positions glutamine 245 to arginine 249 are ACP-binding. The active site involves asparagine 274.

It belongs to the thiolase-like superfamily. FabH family. As to quaternary structure, homodimer.

It is found in the cytoplasm. It catalyses the reaction malonyl-[ACP] + acetyl-CoA + H(+) = 3-oxobutanoyl-[ACP] + CO2 + CoA. It participates in lipid metabolism; fatty acid biosynthesis. In terms of biological role, catalyzes the condensation reaction of fatty acid synthesis by the addition to an acyl acceptor of two carbons from malonyl-ACP. Catalyzes the first condensation reaction which initiates fatty acid synthesis and may therefore play a role in governing the total rate of fatty acid production. Possesses both acetoacetyl-ACP synthase and acetyl transacylase activities. Its substrate specificity determines the biosynthesis of branched-chain and/or straight-chain of fatty acids. This chain is Beta-ketoacyl-[acyl-carrier-protein] synthase III, found in Sodalis glossinidius (strain morsitans).